The following is a 292-amino-acid chain: Large ribosomal subunit protein mL67 (292 aa).

The segment at 59 to 83 (VELKSPSRLQLKSEPGNKGNPKGHG) is disordered.

Belongs to the mitochondrion-specific ribosomal protein mL67 family. In terms of assembly, component of the mitochondrial large ribosomal subunit (mt-LSU). Mature N.crassa 74S mitochondrial ribosomes consist of a small (37S) and a large (54S) subunit. The 37S small subunit contains a 16S ribosomal RNA (16S mt-rRNA) and 32 different proteins. The 54S large subunit contains a 23S rRNA (23S mt-rRNA) and 42 different proteins.

It localises to the mitochondrion. Its function is as follows. Component of the mitochondrial ribosome (mitoribosome), a dedicated translation machinery responsible for the synthesis of mitochondrial genome-encoded proteins, including at least some of the essential transmembrane subunits of the mitochondrial respiratory chain. The mitoribosomes are attached to the mitochondrial inner membrane and translation products are cotranslationally integrated into the membrane. mL67/MHR1 also has extraribosomal functions, being involved in regulation of mitochondrial DNA recombination, maintenance and repair, and generation of homoplasmic cells. mL67/MHR1 also acts as a transcription factor involved in regulation of RNA polymerase II-dependent transcription. This is Large ribosomal subunit protein mL67 (mhr1) from Neurospora crassa (strain ATCC 24698 / 74-OR23-1A / CBS 708.71 / DSM 1257 / FGSC 987).